The following is a 586-amino-acid chain: Dual specificity tyrosine-phosphorylation-regulated kinase 3 (586 aa).

Over residues 1–13 (MGGAARDRGRKDA) the composition is skewed to basic and acidic residues. The tract at residues 1-187 (MGGAARDRGR…QGVIGGPNNG (187 aa)) is disordered. Positions 208–521 (YEVLKIIGKG…PAQALRHPWI (314 aa)) constitute a Protein kinase domain. Residues 214–222 (IGKGSFGQV), K237, and 287–290 (FELL) contribute to the ATP site. D334 serves as the catalytic Proton acceptor. Y368 bears the Phosphotyrosine mark. The Nuclear localization signal motif lies at 467-480 (RSRRGKKRGPPGSK).

Belongs to the protein kinase superfamily. CMGC Ser/Thr protein kinase family. MNB/DYRK subfamily. Interacts with SIRT1. Mg(2+) serves as cofactor. Post-translationally, ubiquitinated at anaphase by the anaphase-promoting complex (APC/C), leading to its degradation by the proteasome. In terms of processing, protein kinase activity is activated following autophosphorylation at Tyr-368.

It localises to the nucleus. It is found in the cytoplasm. The protein resides in the nucleus speckle. Its subcellular location is the cytoplasmic granule. The protein localises to the cytoskeleton. It localises to the microtubule organizing center. It is found in the centrosome. It carries out the reaction L-seryl-[protein] + ATP = O-phospho-L-seryl-[protein] + ADP + H(+). The catalysed reaction is L-threonyl-[protein] + ATP = O-phospho-L-threonyl-[protein] + ADP + H(+). The enzyme catalyses L-tyrosyl-[protein] + ATP = O-phospho-L-tyrosyl-[protein] + ADP + H(+). Its activity is regulated as follows. Protein kinase activity is activated following autophosphorylation at Tyr-368. Functionally, dual-specificity protein kinase that promotes disassembly of several types of membraneless organelles during mitosis, such as stress granules, nuclear speckles and pericentriolar material. Dual-specificity tyrosine-regulated kinases (DYRKs) autophosphorylate a critical tyrosine residue in their activation loop and phosphorylate their substrate on serine and threonine residues. Acts as a central dissolvase of membraneless organelles during the G2-to-M transition, after the nuclear-envelope breakdown: acts by mediating phosphorylation of multiple serine and threonine residues in unstructured domains of proteins, such as SRRM1 and PCM1. Does not mediate disassembly of all membraneless organelles: disassembly of P-body and nucleolus is not regulated by DYRK3. Dissolution of membraneless organelles at the onset of mitosis is also required to release mitotic regulators, such as ZNF207, from liquid-unmixed organelles where they are sequestered and keep them dissolved during mitosis. Regulates mTORC1 by mediating the dissolution of stress granules: during stressful conditions, DYRK3 partitions from the cytosol to the stress granule, together with mTORC1 components, which prevents mTORC1 signaling. When stress signals are gone, the kinase activity of DYRK3 is required for the dissolution of stress granule and mTORC1 relocation to the cytosol: acts by mediating the phosphorylation of the mTORC1 inhibitor AKT1S1, allowing full reactivation of mTORC1 signaling. Also acts as a negative regulator of EPO-dependent erythropoiesis: may place an upper limit on red cell production during stress erythropoiesis. Inhibits cell death due to cytokine withdrawal in hematopoietic progenitor cells. Promotes cell survival upon genotoxic stress through phosphorylation of SIRT1: this in turn inhibits p53/TP53 activity and apoptosis. The sequence is that of Dual specificity tyrosine-phosphorylation-regulated kinase 3 from Mus musculus (Mouse).